The following is a 178-amino-acid chain: MSLDSLKSAVPDYAKDLKLNLGSVIGNSDLPAQQLWGTVLATAIASRSPIVLRELEPEAKANLSPEAYSAAKSAAAVMAMNNVFYRTRHLLSDHEYGTLRAGLRMNVIGNPGVDKVDFELWSFAVSAINGCGMCLDSHEQVLRKAGVDRETIQEAFKIAAVVEAVGVTLDAEAVLAAE.

The Proton donor role is filled by cysteine 131. Cysteine 131 and cysteine 134 are oxidised to a cystine. Catalysis depends on cysteine 134, which acts as the Cysteine sulfenic acid (-SOH) intermediate.

Belongs to the AhpD family. As to quaternary structure, homotrimer.

It catalyses the reaction N(6)-[(R)-dihydrolipoyl]-L-lysyl-[lipoyl-carrier protein] + a hydroperoxide = N(6)-[(R)-lipoyl]-L-lysyl-[lipoyl-carrier protein] + an alcohol + H2O. Functionally, antioxidant protein with alkyl hydroperoxidase activity. Required for the reduction of the AhpC active site cysteine residues and for the regeneration of the AhpC enzyme activity. This Streptomyces coelicolor (strain ATCC BAA-471 / A3(2) / M145) protein is Alkyl hydroperoxide reductase AhpD.